Reading from the N-terminus, the 124-residue chain is Small ribosomal subunit protein uS13 (124 aa).

The tract at residues 97-124 (PVRGQRTKTNARTRKGPKRTIAGKKKAR) is disordered.

This sequence belongs to the universal ribosomal protein uS13 family. In terms of assembly, part of the 30S ribosomal subunit. Forms a loose heterodimer with protein S19. Forms two bridges to the 50S subunit in the 70S ribosome.

Its function is as follows. Located at the top of the head of the 30S subunit, it contacts several helices of the 16S rRNA. In the 70S ribosome it contacts the 23S rRNA (bridge B1a) and protein L5 of the 50S subunit (bridge B1b), connecting the 2 subunits; these bridges are implicated in subunit movement. Contacts the tRNAs in the A and P-sites. The chain is Small ribosomal subunit protein uS13 from Mycolicibacterium gilvum (strain PYR-GCK) (Mycobacterium gilvum (strain PYR-GCK)).